A 307-amino-acid polypeptide reads, in one-letter code: N-acetylmuramic acid 6-phosphate etherase (307 aa).

One can recognise an SIS domain in the interval 59 to 222 (TADRLRQGGR…STGVMVKLGK (164 aa)). Glutamate 87 (proton donor) is an active-site residue. The active site involves glutamate 118.

The protein belongs to the GCKR-like family. MurNAc-6-P etherase subfamily. In terms of assembly, homodimer.

The enzyme catalyses N-acetyl-D-muramate 6-phosphate + H2O = N-acetyl-D-glucosamine 6-phosphate + (R)-lactate. It participates in amino-sugar metabolism; N-acetylmuramate degradation. Its function is as follows. Specifically catalyzes the cleavage of the D-lactyl ether substituent of MurNAc 6-phosphate, producing GlcNAc 6-phosphate and D-lactate. The polypeptide is N-acetylmuramic acid 6-phosphate etherase (Nostoc sp. (strain PCC 7120 / SAG 25.82 / UTEX 2576)).